The primary structure comprises 97 residues: Serine protease inhibitor Kazal-type 13 (97 aa).

The N-terminal stretch at 1–26 (MTRRGCWPHRIIFSLILLTWTHVTLA) is a signal peptide. A Kazal-like domain is found at 36–97 (NWPKPPCKMY…IEFVKYGKCE (62 aa)). 3 disulfides stabilise this stretch: Cys42–Cys78, Cys56–Cys75, and Cys64–Cys96.

Restricted to the epididymis, with highest levels in the initial segment, including epithelial cells, lumen, and sperm (at protein level). Localizes to the sperm heads, where it is restricted to the acrosomal region in epididymal spermatozoa, but not in testicular spermatozoa (at protein level).

It localises to the secreted. Functionally, may be a serine protease inhibitor. Essential for sperm maturation and fertility. Inhibits sperm acrosome reaction, protecting sperm from premature reaction. This is Serine protease inhibitor Kazal-type 13 (Spink13) from Rattus norvegicus (Rat).